The sequence spans 314 residues: Methionyl-tRNA formyltransferase (314 aa).

A (6S)-5,6,7,8-tetrahydrofolate-binding site is contributed by 112 to 115; the sequence is SLLP.

It belongs to the Fmt family.

It carries out the reaction L-methionyl-tRNA(fMet) + (6R)-10-formyltetrahydrofolate = N-formyl-L-methionyl-tRNA(fMet) + (6S)-5,6,7,8-tetrahydrofolate + H(+). Its function is as follows. Attaches a formyl group to the free amino group of methionyl-tRNA(fMet). The formyl group appears to play a dual role in the initiator identity of N-formylmethionyl-tRNA by promoting its recognition by IF2 and preventing the misappropriation of this tRNA by the elongation apparatus. This is Methionyl-tRNA formyltransferase from Aeromonas salmonicida (strain A449).